The sequence spans 651 residues: DNA mismatch repair protein MutL (651 aa).

The segment at 383 to 405 (TAAEEPTPAPTSPDLEIGDLDDQ) is disordered.

The protein belongs to the DNA mismatch repair MutL/HexB family.

Functionally, this protein is involved in the repair of mismatches in DNA. It is required for dam-dependent methyl-directed DNA mismatch repair. May act as a 'molecular matchmaker', a protein that promotes the formation of a stable complex between two or more DNA-binding proteins in an ATP-dependent manner without itself being part of a final effector complex. The chain is DNA mismatch repair protein MutL from Lacticaseibacillus casei (strain BL23) (Lactobacillus casei).